A 270-amino-acid chain; its full sequence is 4-hydroxy-tetrahydrodipicolinate reductase (270 aa).

NAD(+)-binding positions include 8–13 and Glu-34; that span reads GAAGRM. Residue Arg-35 participates in NADP(+) binding. NAD(+)-binding positions include 98–100 and 122–125; these read GST and SPNM. His-155 serves as the catalytic Proton donor/acceptor. His-156 is a (S)-2,3,4,5-tetrahydrodipicolinate binding site. The Proton donor role is filled by Lys-159. Residue 165–166 coordinates (S)-2,3,4,5-tetrahydrodipicolinate; the sequence is GT.

The protein belongs to the DapB family.

The protein resides in the cytoplasm. The catalysed reaction is (S)-2,3,4,5-tetrahydrodipicolinate + NAD(+) + H2O = (2S,4S)-4-hydroxy-2,3,4,5-tetrahydrodipicolinate + NADH + H(+). It catalyses the reaction (S)-2,3,4,5-tetrahydrodipicolinate + NADP(+) + H2O = (2S,4S)-4-hydroxy-2,3,4,5-tetrahydrodipicolinate + NADPH + H(+). The protein operates within amino-acid biosynthesis; L-lysine biosynthesis via DAP pathway; (S)-tetrahydrodipicolinate from L-aspartate: step 4/4. In terms of biological role, catalyzes the conversion of 4-hydroxy-tetrahydrodipicolinate (HTPA) to tetrahydrodipicolinate. The protein is 4-hydroxy-tetrahydrodipicolinate reductase of Anaeromyxobacter dehalogenans (strain 2CP-C).